We begin with the raw amino-acid sequence, 89 residues long: MSSQQQKQPCTPPPQLQQQQVKQPCQPPPQEPCIPKTKEPCLPKVPEPCHPKVPEPCQPKVPEPCHPKVPEPCPSTVTPAPAQQKTKQK.

The tract at residues 1–29 (MSSQQQKQPCTPPPQLQQQQVKQPCQPPP) is disordered. Ser2 carries the N-acetylserine modification. 8 repeat units span residues 3 to 14 (SQQQKQPCTPPP), 18 to 29 (QQQVKQPCQPPP), 31 to 38 (EPCIPKTK), 39 to 46 (EPCLPKVP), 47 to 54 (EPCHPKVP), 55 to 62 (EPCQPKVP), 63 to 70 (EPCHPKVP), and 71 to 78 (EPCPSTVT). The interval 3 to 29 (SQQQKQPCTPPPQLQQQQVKQPCQPPP) is 2 X 12 AA approximate repeats. The segment at 31–78 (EPCIPKTKEPCLPKVPEPCHPKVPEPCQPKVPEPCHPKVPEPCPSTVT) is 6 X 8 AA approximate tandem repeats. Residues 68–89 (KVPEPCPSTVTPAPAQQKTKQK) form a disordered region. Over residues 75-89 (STVTPAPAQQKTKQK) the composition is skewed to polar residues.

Belongs to the cornifin (SPRR) family.

The protein localises to the cytoplasm. In terms of biological role, cross-linked envelope protein of keratinocytes. It is a keratinocyte protein that first appears in the cell cytosol, but ultimately becomes cross-linked to membrane proteins by transglutaminase. All that results in the formation of an insoluble envelope beneath the plasma membrane. The protein is Cornifin (SPRR1) of Macaca mulatta (Rhesus macaque).